Here is a 538-residue protein sequence, read N- to C-terminus: MLDSLVSKLPSLSTSDHASVVALNLFVALLCACIVLGHLLEENRWMNESITALLIGLGTGVTILLISKGKSSHLLVFSEDLFFIYLLPPIIFNAGFQVKKKQFFRNFVTIMLFGAVGTIISCTIISLGVTQFFKKLDIGTFDLGDYLAIGAIFAATDSVCTLQVLNQDETPLLYSLVFGEGVVNDATSVVVFNAIQSFDLTHLNHEAAFHLLGNFLYLFLLSTLLGAATGLISAYVIKKLYFGRHSTDREVALMMLMAYLSYMLAELFDLSGILTVFFCGIVMSHYTWHNVTESSRITTKHTFATLSFLAETFIFLYVGMDALDIDKWRSVSDTPGTSIAVSSILMGLVMVGRAAFVFPLSFLSNLAKKNQSEKINFNMQVVIWWSGLMRGAVSMALAYNKFTRAGHTDVRGNAIMITSTITVCLFSTVVFGMLTKPLISYLLPHQNATTSMLSDDNTPKSIHIPLLDQDSFIEPSGNHNVPRPDSIRGFLTRPTRTVHYYWRQFDDSFMRPVFGGRGFVPFVPGSPTERNPPDLSKA.

Residues methionine 1–serine 19 are Cytoplasmic-facing. Residues valine 20–leucine 40 form a helical membrane-spanning segment. The Vacuolar portion of the chain corresponds to glutamate 41–tryptophan 45. Residues methionine 46–isoleucine 66 traverse the membrane as a helical segment. Residues serine 67–histidine 73 lie on the Cytoplasmic side of the membrane. Residues leucine 74 to alanine 94 constitute an intramembrane region (helical). Topologically, residues glycine 95–asparagine 106 are cytoplasmic. A helical transmembrane segment spans residues phenylalanine 107–leucine 127. Residues glycine 128–tyrosine 146 lie on the Vacuolar side of the membrane. Intramembrane regions (helical) lie at residues leucine 147–asparagine 166 and leucine 172–phenylalanine 192. Topologically, residues asparagine 193–leucine 216 are vacuolar. The chain crosses the membrane as a helical span at residues tyrosine 217–isoleucine 237. Topologically, residues lysine 238–tyrosine 262 are cytoplasmic. The helical transmembrane segment at methionine 263–methionine 283 threads the bilayer. Over serine 284–threonine 302 the chain is Vacuolar. N-linked (GlcNAc...) asparagine glycosylation occurs at asparagine 290. A helical membrane pass occupies residues phenylalanine 303 to leucine 323. The Cytoplasmic segment spans residues aspartate 324–serine 342. Residues serine 343–leucine 363 traverse the membrane as a helical segment. The Vacuolar segment spans residues serine 364–asparagine 378. A glycan (N-linked (GlcNAc...) asparagine) is linked at asparagine 370. Residues methionine 379 to tyrosine 399 traverse the membrane as a helical segment. The Cytoplasmic segment spans residues asparagine 400–asparagine 413. A helical membrane pass occupies residues alanine 414 to leucine 434. Residues threonine 435–alanine 538 lie on the Vacuolar side of the membrane. A glycan (N-linked (GlcNAc...) asparagine) is linked at asparagine 447. The segment at arginine 496–glycine 518 is interaction with CML18/CAM15.

It belongs to the monovalent cation:proton antiporter 1 (CPA1) transporter (TC 2.A.36) family. In terms of assembly, calcium and pH-dependent interaction with CML18/CAM15 (increases when pH decreases, better at pH 5.5 than at pH 7.5). As to expression, ubiquitous, with higher levels around vascular tissues and guard cells.

The protein resides in the vacuole membrane. The protein localises to the endoplasmic reticulum membrane. Its subcellular location is the golgi apparatus membrane. It carries out the reaction Na(+)(in) + H(+)(out) = Na(+)(out) + H(+)(in). The enzyme catalyses K(+)(in) + H(+)(out) = K(+)(out) + H(+)(in). Functionally, acts in low affinity electroneutral exchange of protons for cations such as Na(+) or K(+) across membranes. Can also exchange Li(+) and Cs(+) with a lower affinity. Involved in vacuolar ion compartmentalization necessary for cell volume regulation and cytoplasmic Na(+) detoxification. Required during leaves expansion, probably to stimulate epidermal cell expansion. Confers competence to grow in high salinity conditions. This chain is Sodium/hydrogen exchanger 1 (NHX1), found in Arabidopsis thaliana (Mouse-ear cress).